The sequence spans 234 residues: Adenosine 5'-phosphosulfate reductase (234 aa).

C120, C121, C203, and C206 together coordinate [4Fe-4S] cluster. C229 (nucleophile; cysteine thiosulfonate intermediate) is an active-site residue.

It belongs to the PAPS reductase family. CysH subfamily. [4Fe-4S] cluster is required as a cofactor.

The protein localises to the cytoplasm. The catalysed reaction is [thioredoxin]-disulfide + sulfite + AMP + 2 H(+) = adenosine 5'-phosphosulfate + [thioredoxin]-dithiol. It participates in sulfur metabolism; hydrogen sulfide biosynthesis; sulfite from sulfate. Functionally, catalyzes the formation of sulfite from adenosine 5'-phosphosulfate (APS) using thioredoxin as an electron donor. In Bacillus cereus (strain B4264), this protein is Adenosine 5'-phosphosulfate reductase.